The sequence spans 445 residues: Glutamyl-tRNA(Gln) amidotransferase subunit D (445 aa).

The Asparaginase/glutaminase domain occupies 93–425; sequence SEIKIISTGG…EKIRSLMISN (333 aa). Residues threonine 103, threonine 179, aspartate 180, and lysine 258 contribute to the active site.

The protein belongs to the asparaginase 1 family. GatD subfamily. Heterodimer of GatD and GatE.

It catalyses the reaction L-glutamyl-tRNA(Gln) + L-glutamine + ATP + H2O = L-glutaminyl-tRNA(Gln) + L-glutamate + ADP + phosphate + H(+). Allows the formation of correctly charged Gln-tRNA(Gln) through the transamidation of misacylated Glu-tRNA(Gln) in organisms which lack glutaminyl-tRNA synthetase. The reaction takes place in the presence of glutamine and ATP through an activated gamma-phospho-Glu-tRNA(Gln). The GatDE system is specific for glutamate and does not act on aspartate. This Saccharolobus islandicus (strain Y.N.15.51 / Yellowstone #2) (Sulfolobus islandicus) protein is Glutamyl-tRNA(Gln) amidotransferase subunit D.